A 280-amino-acid polypeptide reads, in one-letter code: Small ribosomal subunit protein uS2 (280 aa).

This sequence belongs to the universal ribosomal protein uS2 family.

The chain is Small ribosomal subunit protein uS2 from Desulforapulum autotrophicum (strain ATCC 43914 / DSM 3382 / VKM B-1955 / HRM2) (Desulfobacterium autotrophicum).